The chain runs to 205 residues: Large ribosomal subunit protein uL4 (205 aa).

The tract at residues 43–77 (RRRSGTASTKGRSDVAGSRAKLFRQKGTGRARRGD) is disordered. Over residues 63-73 (KLFRQKGTGRA) the composition is skewed to basic residues.

The protein belongs to the universal ribosomal protein uL4 family. As to quaternary structure, part of the 50S ribosomal subunit.

Its function is as follows. One of the primary rRNA binding proteins, this protein initially binds near the 5'-end of the 23S rRNA. It is important during the early stages of 50S assembly. It makes multiple contacts with different domains of the 23S rRNA in the assembled 50S subunit and ribosome. Functionally, forms part of the polypeptide exit tunnel. In Desulfosudis oleivorans (strain DSM 6200 / JCM 39069 / Hxd3) (Desulfococcus oleovorans), this protein is Large ribosomal subunit protein uL4.